The sequence spans 231 residues: SrfA-induced gene F protein (231 aa).

The protein is SrfA-induced gene F protein (sigF) of Dictyostelium discoideum (Social amoeba).